Consider the following 208-residue polypeptide: MNKAELIDVLTTKMGTDRRQATAAVENVVDTIVRAVHKGDSVTITGFGVFEQRRRAARVARNPRTGETVKVKPTSVPAFRPGAQFKAVISGAQKLPADGPAVKRGVTAGPAKKAAKKAPAKKAAAKKTATKAAAKKAPAKKAATKAPAKKAATKAPAKKAATKAPAKKAATKAPAKKAAAKAPAKKAATKAPAKKAAAKKAPAKKGRR.

The tract at residues 1–90 is bacterial histone-like domain; sequence MNKAELIDVL…PGAQFKAVIS (90 aa). Position 3 is an N6-acetyllysine (Lys3). At Lys3 the chain carries N6-acetyllysine; alternate; partial. Lys3 carries the post-translational modification N6-methyllysine; alternate; partial. Lys72 carries the post-translational modification N6-acetyllysine; partial. Lys86 is subject to N6-methyllysine; partial. Residues 92–208 form a C-terminus, required for nucleoid localization region; sequence AQKLPADGPA…KKAPAKKGRR (117 aa). 2 positions are modified to N6-acetyllysine; alternate; partial: Lys94 and Lys103. N6-methyllysine; alternate; partial occurs at positions 94 and 103. A disordered region spans residues 96 to 208; that stretch reads PADGPAVKRG…KKAPAKKGRR (113 aa). Residues 101-205 form a degenerate repeats region region; it reads AVKRGVTAGP…AAAKKAPAKK (105 aa). Basic residues predominate over residues 113-208; that stretch reads KAAKKAPAKK…KKAPAKKGRR (96 aa). 4 positions are modified to N6-acetyllysine: Lys116, Lys136, Lys149, and Lys168.

Belongs to the bacterial histone-like protein family. Long actinobacterial subfamily. In terms of assembly, may form oligomers. Interacts with RNase E (rne). In addition to the identifed modifications, is also methylated on one of Arg-53; Arg-54 or Arg-55.

The protein localises to the cytoplasm. It is found in the nucleoid. It localises to the secreted. The protein resides in the cell wall. The enzyme catalyses 4 Fe(2+) + O2 + 4 H(+) = 4 Fe(3+) + 2 H2O. Its activity is regulated as follows. Trans-stilbene derivative 4,4'-[(E)-ethene-1,2 diylbis({5[(phenylcarbonyl)amino]benzene-2,1-diyl}sulfonylimino)] dibenzoic acid (SD1) inhibits DNA binding at 50 uM. SD1 does not inhibit growth in a range of 3-1600 uM. In terms of biological role, a nucleoid-associated protein (NAP) that plays a crucial role in local chromosome architecture. Helps organize newly replicated oriC proximal regions and contributes to the timing of replication initiation and coordinating replication with chromosome segregation. There are between 30,000-60,000 molecules in a log phase cell; the protein-DNA complex is dynamic during the cell cycle, with more complexes near the cell ends. Binds irregularly along the chromosome with higher binding near the origin of replication (oriC) and lowest binding near the chromosome terminus (ter). Binds DNA non-sequence specifically via both its N- and C-terminal domains with high affinity, has no preference for linear or supercoiled DNA. Binds four-way junction DNA. Represses T7 RNA polymerase in vitro. The C-terminal domain enhances DNA end-joining in vitro in the presence of T4 DNA ligase. RNase E and HupB jointly contribute to cellular adaptation to changing growth conditions and survival during antibiotic treatment. Functionally, has ferroxidase activity, converts Fe(2+) into Fe(3+). Binds Fe(3+) but not Fe(2+); prevents the generation of hydroxyl radicals by the Fenton reaction and thus protects DNA from damage. May function in iron storage. Plays a role in epigenetic resistance to antibiotics. Growth on levels of isoniazid (INH) near the minimal inhibitory concentration (MIC) kills most bacteria. The surviving cells grow as either large or small colony variants (SCV), evidence suggest SCVs are associated with persistent infections. Mutating this protein leads to specific loss of SCVs. Its function is as follows. May play a role in cell wall assembly. This is DNA-binding protein HupB from Mycolicibacterium smegmatis (strain ATCC 700084 / mc(2)155) (Mycobacterium smegmatis).